The primary structure comprises 464 residues: tRNA modification GTPase MnmE (464 aa).

(6S)-5-formyl-5,6,7,8-tetrahydrofolate contacts are provided by Arg25, Glu87, and Lys130. One can recognise a TrmE-type G domain in the interval 226-386; sequence GLSVVLAGQP…LRAELLRIAG (161 aa). Asn236 is a K(+) binding site. GTP contacts are provided by residues 236–241, 255–261, and 280–283; these read NVGKSS, TPIAGTT, and DTAG. Ser240 is a Mg(2+) binding site. K(+) contacts are provided by Thr255, Ile257, and Thr260. Thr261 lines the Mg(2+) pocket. Residue Lys464 participates in (6S)-5-formyl-5,6,7,8-tetrahydrofolate binding.

Belongs to the TRAFAC class TrmE-Era-EngA-EngB-Septin-like GTPase superfamily. TrmE GTPase family. As to quaternary structure, homodimer. Heterotetramer of two MnmE and two MnmG subunits. The cofactor is K(+).

The protein resides in the cytoplasm. Exhibits a very high intrinsic GTPase hydrolysis rate. Involved in the addition of a carboxymethylaminomethyl (cmnm) group at the wobble position (U34) of certain tRNAs, forming tRNA-cmnm(5)s(2)U34. This is tRNA modification GTPase MnmE from Burkholderia orbicola (strain AU 1054).